Reading from the N-terminus, the 239-residue chain is Ribonuclease PH (239 aa).

Phosphate-binding positions include Arg-86 and 124–126 (GTR).

This sequence belongs to the RNase PH family. As to quaternary structure, homohexameric ring arranged as a trimer of dimers.

The catalysed reaction is tRNA(n+1) + phosphate = tRNA(n) + a ribonucleoside 5'-diphosphate. In terms of biological role, phosphorolytic 3'-5' exoribonuclease that plays an important role in tRNA 3'-end maturation. Removes nucleotide residues following the 3'-CCA terminus of tRNAs; can also add nucleotides to the ends of RNA molecules by using nucleoside diphosphates as substrates, but this may not be physiologically important. Probably plays a role in initiation of 16S rRNA degradation (leading to ribosome degradation) during starvation. The chain is Ribonuclease PH from Sinorhizobium medicae (strain WSM419) (Ensifer medicae).